Reading from the N-terminus, the 344-residue chain is BURP domain-containing protein 16 (344 aa).

An N-terminal signal peptide occupies residues 1–25 (MATSFLFSLILLLITALSLPFPLHA). N-linked (GlcNAc...) asparagine glycans are attached at residues asparagine 90, asparagine 120, asparagine 181, and asparagine 333. The 214-residue stretch at 128–341 (FFREQELKEG…FNGSMTWVIA (214 aa)) folds into the BURP domain.

As to expression, expressed in roots, stems, leaves and panicles.

The protein is BURP domain-containing protein 16 (BURP16) of Oryza sativa subsp. japonica (Rice).